Here is a 418-residue protein sequence, read N- to C-terminus: Histidine--tRNA ligase (418 aa).

It belongs to the class-II aminoacyl-tRNA synthetase family.

The protein resides in the cytoplasm. The catalysed reaction is tRNA(His) + L-histidine + ATP = L-histidyl-tRNA(His) + AMP + diphosphate + H(+). The polypeptide is Histidine--tRNA ligase (Methanococcus aeolicus (strain ATCC BAA-1280 / DSM 17508 / OCM 812 / Nankai-3)).